A 108-amino-acid chain; its full sequence is Thiosulfate sulfurtransferase GlpE (108 aa).

Residues 18 to 106 (QNEDAVLVDI…WVRSELPIEL (89 aa)) form the Rhodanese domain. Cysteine 66 (cysteine persulfide intermediate) is an active-site residue.

This sequence belongs to the GlpE family.

Its subcellular location is the cytoplasm. The catalysed reaction is thiosulfate + hydrogen cyanide = thiocyanate + sulfite + 2 H(+). It carries out the reaction thiosulfate + [thioredoxin]-dithiol = [thioredoxin]-disulfide + hydrogen sulfide + sulfite + 2 H(+). In terms of biological role, transferase that catalyzes the transfer of sulfur from thiosulfate to thiophilic acceptors such as cyanide or dithiols. May function in a CysM-independent thiosulfate assimilation pathway by catalyzing the conversion of thiosulfate to sulfite, which can then be used for L-cysteine biosynthesis. In Glaesserella parasuis serovar 5 (strain SH0165) (Haemophilus parasuis), this protein is Thiosulfate sulfurtransferase GlpE.